Consider the following 215-residue polypeptide: Probable phosphoglycerate mutase GpmB (215 aa).

Substrate-binding positions include 8–15 (RHGETLWN), 21–22 (QG), Arg58, 82–85 (ELNM), and 151–152 (GM). His9 acts as the Tele-phosphohistidine intermediate in catalysis. Glu82 functions as the Proton donor/acceptor in the catalytic mechanism.

The protein belongs to the phosphoglycerate mutase family. GpmB subfamily.

It carries out the reaction (2R)-2-phosphoglycerate = (2R)-3-phosphoglycerate. The protein operates within carbohydrate degradation; glycolysis; pyruvate from D-glyceraldehyde 3-phosphate: step 3/5. The polypeptide is Probable phosphoglycerate mutase GpmB (Yersinia pseudotuberculosis serotype O:1b (strain IP 31758)).